The chain runs to 704 residues: mRNA (2'-O-methyladenosine-N(6)-)-methyltransferase (704 aa).

The tract at residues Met-1–Pro-33 is disordered. Polar residues predominate over residues Leu-16–Cys-29. Phosphoserine is present on Ser-30. In terms of domain architecture, WW spans Glu-43–Leu-77. Residues Gly-88–Pro-151 are disordered. The short motif at Lys-109–Arg-113 is the Nuclear localization signal element. Ser-116 bears the Phosphoserine mark. Residues Pro-136–Gly-149 are compositionally biased toward polar residues. Thr-152 carries the post-translational modification Phosphothreonine. Substrate is bound by residues Arg-235 and Arg-265. S-adenosyl-L-methionine is bound at residue Asn-553–Phe-556. Substrate-binding positions include Glu-558 and Trp-588–Pro-592. Position 614–616 (Phe-614–His-616) interacts with S-adenosyl-L-methionine. Residues Leu-663–Thr-704 are disordered. A Nuclear localization signal motif is present at residues Gln-669–Ser-684. Positions Ser-670 to Ser-684 are enriched in low complexity. Residues Glu-685–Thr-704 show a composition bias toward basic and acidic residues.

This sequence belongs to the CAPAM family. As to quaternary structure, interacts with POLR2A; interacts with the phosphorylated C-terminal domain (CTD) of POLR2A. Ubiquitous.

Its subcellular location is the nucleus. The catalysed reaction is a 5'-end (N(7)-methyl 5'-triphosphoguanosine)-(2'-O-methyladenosine) in mRNA + S-adenosyl-L-methionine = a 5'-end (N(7)-methyl 5'-triphosphoguanosine)-(N(6),2'-O-dimethyladenosine) in mRNA + S-adenosyl-L-homocysteine + H(+). With respect to regulation, cap-specific adenosine methyltransferase activity is inhibited by zinc. Functionally, cap-specific adenosine methyltransferase that catalyzes formation of N(6),2'-O-dimethyladenosine cap (m6A(m)) by methylating the adenosine at the second transcribed position of capped mRNAs. Recruited to the early elongation complex of RNA polymerase II (RNAPII) via interaction with POLR2A and mediates formation of m6A(m) co-transcriptionally. The polypeptide is mRNA (2'-O-methyladenosine-N(6)-)-methyltransferase (Homo sapiens (Human)).